The sequence spans 280 residues: Tryptophan synthase alpha chain (280 aa).

Active-site proton acceptor residues include E49 and D60.

The protein belongs to the TrpA family. Tetramer of two alpha and two beta chains.

The enzyme catalyses (1S,2R)-1-C-(indol-3-yl)glycerol 3-phosphate + L-serine = D-glyceraldehyde 3-phosphate + L-tryptophan + H2O. It participates in amino-acid biosynthesis; L-tryptophan biosynthesis; L-tryptophan from chorismate: step 5/5. In terms of biological role, the alpha subunit is responsible for the aldol cleavage of indoleglycerol phosphate to indole and glyceraldehyde 3-phosphate. The chain is Tryptophan synthase alpha chain from Corynebacterium efficiens (strain DSM 44549 / YS-314 / AJ 12310 / JCM 11189 / NBRC 100395).